The following is a 443-amino-acid chain: ATP-dependent protease ATPase subunit HslU (443 aa).

ATP-binding positions include I18, 60 to 65, D256, E321, and R393; that span reads GVGKTE.

Belongs to the ClpX chaperone family. HslU subfamily. As to quaternary structure, a double ring-shaped homohexamer of HslV is capped on each side by a ring-shaped HslU homohexamer. The assembly of the HslU/HslV complex is dependent on binding of ATP.

The protein localises to the cytoplasm. ATPase subunit of a proteasome-like degradation complex; this subunit has chaperone activity. The binding of ATP and its subsequent hydrolysis by HslU are essential for unfolding of protein substrates subsequently hydrolyzed by HslV. HslU recognizes the N-terminal part of its protein substrates and unfolds these before they are guided to HslV for hydrolysis. In Histophilus somni (strain 2336) (Haemophilus somnus), this protein is ATP-dependent protease ATPase subunit HslU.